A 427-amino-acid chain; its full sequence is UPF0229 protein YeaH (427 aa).

Positions 79–90 (NDHFIQNDRIER) are enriched in basic and acidic residues. The segment at 79-110 (NDHFIQNDRIERPQGGGGGSGSGQGQASQDGE) is disordered. The segment covering 92–102 (QGGGGGSGSGQ) has biased composition (gly residues).

This sequence belongs to the UPF0229 family.

The chain is UPF0229 protein YeaH from Salmonella paratyphi B (strain ATCC BAA-1250 / SPB7).